The sequence spans 607 residues: UvrABC system protein C (607 aa).

In terms of domain architecture, GIY-YIG spans 16 to 94; that stretch reads GRPGVYRMFD…IKEWRPPYNI (79 aa). The region spanning 203-238 is the UVR domain; it reads HALTNELSTAMEEAAINLEFERAAELRDQIALLRRV.

Belongs to the UvrC family. As to quaternary structure, interacts with UvrB in an incision complex.

It is found in the cytoplasm. In terms of biological role, the UvrABC repair system catalyzes the recognition and processing of DNA lesions. UvrC both incises the 5' and 3' sides of the lesion. The N-terminal half is responsible for the 3' incision and the C-terminal half is responsible for the 5' incision. This chain is UvrABC system protein C, found in Pseudomonas fluorescens (strain Pf0-1).